The primary structure comprises 194 residues: Imidazoleglycerol-phosphate dehydratase (194 aa).

This sequence belongs to the imidazoleglycerol-phosphate dehydratase family.

The protein localises to the cytoplasm. The catalysed reaction is D-erythro-1-(imidazol-4-yl)glycerol 3-phosphate = 3-(imidazol-4-yl)-2-oxopropyl phosphate + H2O. It functions in the pathway amino-acid biosynthesis; L-histidine biosynthesis; L-histidine from 5-phospho-alpha-D-ribose 1-diphosphate: step 6/9. The chain is Imidazoleglycerol-phosphate dehydratase from Streptococcus thermophilus (strain ATCC BAA-491 / LMD-9).